Consider the following 607-residue polypeptide: DNA mismatch repair protein MutL (607 aa).

This sequence belongs to the DNA mismatch repair MutL/HexB family.

This protein is involved in the repair of mismatches in DNA. It is required for dam-dependent methyl-directed DNA mismatch repair. May act as a 'molecular matchmaker', a protein that promotes the formation of a stable complex between two or more DNA-binding proteins in an ATP-dependent manner without itself being part of a final effector complex. This is DNA mismatch repair protein MutL from Anaeromyxobacter sp. (strain K).